The chain runs to 118 residues: C-type natriuretic peptide 2 (118 aa).

The signal sequence occupies residues 1–22 (MHFCHIVGWGLVLAVLYLRTEA). Positions 23–96 (KPVAQAHQKS…SRKIKGINKK (74 aa)) are excised as a propeptide. A disulfide bridge connects residues C102 and C118.

Belongs to the natriuretic peptide family.

The protein localises to the secreted. Its function is as follows. Exhibits natriuretic and vasodepressor activity. Has a cGMP-stimulating activity. The chain is C-type natriuretic peptide 2 from Aquarana catesbeiana (American bullfrog).